A 415-amino-acid chain; its full sequence is L-threonine dehydratase biosynthetic IlvA (415 aa).

Lys53 is subject to N6-(pyridoxal phosphate)lysine. Pyridoxal 5'-phosphate-binding positions include Asn80, 183 to 187 (GGGGL), and Ser308. The ACT-like domain occupies 332-406 (HYFIIQFPQR…KGFEYREINK (75 aa)).

The protein belongs to the serine/threonine dehydratase family. In terms of assembly, homotetramer. It depends on pyridoxal 5'-phosphate as a cofactor.

It catalyses the reaction L-threonine = 2-oxobutanoate + NH4(+). Its pathway is amino-acid biosynthesis; L-isoleucine biosynthesis; 2-oxobutanoate from L-threonine: step 1/1. Functionally, catalyzes the anaerobic formation of alpha-ketobutyrate and ammonia from threonine in a two-step reaction. The first step involved a dehydration of threonine and a production of enamine intermediates (aminocrotonate), which tautomerizes to its imine form (iminobutyrate). Both intermediates are unstable and short-lived. The second step is the nonenzymatic hydrolysis of the enamine/imine intermediates to form 2-ketobutyrate and free ammonia. In the low water environment of the cell, the second step is accelerated by RidA. This chain is L-threonine dehydratase biosynthetic IlvA (ilvA), found in Halalkalibacterium halodurans (strain ATCC BAA-125 / DSM 18197 / FERM 7344 / JCM 9153 / C-125) (Bacillus halodurans).